A 785-amino-acid polypeptide reads, in one-letter code: Probably inactive leucine-rich repeat receptor-like protein kinase At5g58150 (785 aa).

A signal peptide spans 1–21 (MRLSLWGSLLFFSFFVKHLTS). The Extracellular portion of the chain corresponds to 22-436 (LDPNTDAYHL…KVNKKNTGLK (415 aa)). LRR repeat units lie at residues 64–88 (SENVLHISASGLDLSGSIPDNTIGK), 89–112 (MSKLQTLDLSGNKITSLPSDLWSL), 114–136 (LLESLNLSSNRISEPLPSNIGNF), 138–160 (SLHTLDLSFNSISGKIPAAISNL), 161–184 (VNLTTLKLHNNDFQFGVPPELVHC), 186–208 (SLLSIDLSSNRLNESLPVGFGSA), 210–232 (PLLKSLNLSRNLFQGSLIGVLHE), 236–258 (TVDLSENRFDGHILQLIPGHKHN), 259–283 (WSSLIHLDLSDNSFVGHIFNGLSSA), 284–306 (HKLGHLNLACNRFRAQEFPEIGK), 307–330 (LSALHYLNLSRTNLTNIIPREISR), 331–355 (LSHLKVLDLSSNNLTGHVPMLSVKN), 357–377 (EVLDLSLNKLDGDIPRPLLEK), and 379–405 (AMMQRFNFSFNNLTFCNPNFSQETIQR). A glycan (N-linked (GlcNAc...) asparagine) is linked at Asn-119. 4 N-linked (GlcNAc...) asparagine glycosylation sites follow: Asn-162, Asn-198, Asn-216, and Asn-258. N-linked (GlcNAc...) asparagine glycans are attached at residues Asn-314, Asn-319, and Asn-343. Asn-385, Asn-390, and Asn-397 each carry an N-linked (GlcNAc...) asparagine glycan. The chain crosses the membrane as a helical span at residues 437–457 (IGLGLAISMAFLLIGLLLILV). Over 458–785 (ALRVRRKSRT…GLLKDISPNY (328 aa)) the chain is Cytoplasmic. Phosphothreonine occurs at positions 510 and 518. A Protein kinase domain is found at 521–785 (FDRGTMLWEG…GLLKDISPNY (265 aa)). Residues 527–535 (LWEGKSGPT) and Lys-549 contribute to the ATP site. A phosphotyrosine mark is found at Tyr-594 and Tyr-683.

Belongs to the protein kinase superfamily. Ser/Thr protein kinase family.

The protein localises to the cell membrane. The chain is Probably inactive leucine-rich repeat receptor-like protein kinase At5g58150 from Arabidopsis thaliana (Mouse-ear cress).